We begin with the raw amino-acid sequence, 2321 residues long: MDNPPDFDSLLAAFDEDVGIFPHTPATPGDPYQGVSLQTPCVPVPSLAGQSGTYRPHSSYHGQRSLSSGPVPAAHSPRSGRPGQHSTSNGVAAAAPPAATRAVCDTAGPTTDTSSNRPGGRNSSNGADESGESSSDRSPSYSPCDSYCDPDRVSSYRSSVDGSPESGDIESASGSGGTSSPPLLEILAADFGEDTKALDPDYYLRADPRFKAYFYGMDEISPTTSEDIDELLVLLSPQSVNRASERQLADTAASALRAPSPVFWSAFDSRYPHLAPANQSNSDPLCPETSTASAQILHTNSPTPPTSTSPAPIPSPTQPPACLPSPAPISSPVQPPALLPLIFSPITPVEFIQPQSPPSPPQAPSPPAHSSSSCSPSHLAPSPLSSSPLSSPPQLSPAPVSPPSSPPPLSPGELAPSPDPPRHSISSQPQSCPVPSLGRSADFRREVAAPRVRGAGFRYVYRLSTSVAIPSPPREEVELIKHLPGSYAKLWLHDPDGFSPLPEELKRAGRQNMRSFLLTLPDTHRCSAYWDCLATEALLREILPPPHTSSPQKCPRIIELPREPPLLDGDYKPFDWDVECNYAPPLPDFPEPICELSKDWVGCKIWLFSHCSRLVLSVLDDALHSESHENVLGSRGCGWGPRSECPVPPPGMVTLPSCVWEAAARLPTPALQIPKYAYIISAFLRFLGLRVTPEFVFKVPRLSYRLLDRLRCLRRVQYMAYILTQDFSYQLQAAQGLPCFPACAPPPGAGTPLDEDWYGIPATRCPTIPDRLRHCGQFYSDNYCPVLTEITWVDGRDGSTNPWTGLAWKDFKCLHYRYLFYNVRKGFVMAPENYLTENSVIPGCEVTFEMPQPSTTLPPALSAAIREARVELRNRNNIQTGDGSESGEHRDSKVSYAFMVQQLAIAMVELGFPAYGPAIEKRVRPLYKALCDWRAAVTLAARRRFQQLRCNANMDDDGQPMFPPLPVPDWNNPSTDWRPSPPRSGPKKDFCGDLPAPLTSGPRLTTPSSGRMSELPHTTSSPRSSPRPRGPETSPSNEHIIISPPRNPPSNTTHRNVGHVSRSPSSSSSSSSSSSPSSSSLIVPSSPSSSRSPSPSPPRPRADCSSRPRRGRGSNRGGRSGPQSKGRKTSPRTRKLEDEDYLPQETANRRGGGRPRGRPPKSGRAVQRNDIQVTSSSGLADTSPYDLCGSVWWEVPLPPPGRCWFGGLGGHRQALTDSPEIVEAIHRFNTSHGPVPVYVEEMKDYAKQYDALVNSLFHKSMKVNPLNWMHHGKLSPADAALNHIYVQKFQSSYDSPGAAVTGTVNRCIPHIAGAMKERKLLWAFPHIAASIAMTRRYCKDQKTFLFRSLKKAYASMAFPDNSSETEKGISSKPSTSPSVLITTSTQTTAPPHAPKIDVTAIHGRVYQSVVDLSRCLADGSLDDPEFSFAGCTRPDCLVEEFDAARPLEELADACVLACDSVVAALLCGPDGPHRVAKMLSFYDSRITPHVPDLQQWEKCRILLVSWYHELSDLRAAVYGAYGNTPTSQHLDERALAARVVSLIAETIGPLVRQDPDRAWVRMGSRDITSLLLRDWRGTNDGDPGLVKAKHLRRTAELLNDGRSSKGTYGVFAPPRRPDQLFRGPGRPRRSTSSSQSASDKSPIKSTHRHTSDPIPISTPRPERDPAGTPHENTMSGPVQPAANGHSCSSTPTPAKKGNKTSSDTISLKDPTKTRIKASAKAQTDETLPETSTAHPSAMDQSSSLERKNLYTGPAVSSKERRRSAQSSTPSDIGGVSRKRKSAPEQYKQGLQTPLPMPEPSVGQTLLDPTTTTHDILSSSLPNRSCSSSPSPSKRPYHPSCYSPTDIMTGALVGPRGRQDRAAFRQFPVGTVIGQTPPQSVLNAYCPNGAFVELVEFARIPEPWQEVLRYSPEAMADIARVANALPGKYNSNEIITSAASEAFHTATSKLRARTAWMRYQQESPDDVSIVVLYSPLPGEHLFCVPAPDTPPGGLKFDNKRGGLSFLLAAFSNRLCLPKSSAWAGRWKAAPDISPLTRMGVLFLSTEDLGYQGAVEYLQRQCMKRKKKLIIMDTVEDRYRLPNGPCIIEEATRYMKCIISPRSQCCVRWPGLLDFGTTIITSRDVVGPLTLMDLEQYYYCEIGIEDSTINLCCTGNVRYTVETRLEDVSCVPTTPLFYFAAVKHVRPDFLCGETYSNRAARKWGLCAPLRPIYVIESKMNAIVSPSFLHPTARNLCRSVILPPDPEARPVVVHIPEGTCSALAEDMVASIRSSCITWGQHEEGGPETTAQENSDIRAMKVRPPTKPPYMSPLNIGNRDTTFTD.

7 disordered regions span residues G19–L183, I296–I329, E350–G438, M954–A1180, D1360–H1392, L1597–Y1841, and Q2277–D2321. Residues S114–Y147 show a composition bias toward low complexity. Pro residues-rich tracts occupy residues P302–I329 and Q355–P367. Over residues A368–L389 the composition is skewed to low complexity. A compositionally biased stretch (pro residues) spans S390–S410. Composition is skewed to polar residues over residues S424–P433 and P1002–R1011. The span at P1031–P1093 shows a compositional bias: low complexity. Residues G1151 to K1161 are compositionally biased toward basic residues. 2 stretches are compositionally biased toward polar residues: residues N1169–A1180 and S1371–A1389. The span at S1630–K1644 shows a compositional bias: low complexity. Composition is skewed to polar residues over residues K1720–S1743 and V1801–L1816. A compositionally biased stretch (low complexity) spans S1817–S1839.

Belongs to the herpesviridae ICP4 family. A long stretch of serine residues may be a major site of phosphorylation.

It localises to the host nucleus. This IE protein is a multifunctional protein capable of migrating to the nucleus, binding to DNA, trans-activating other viral genes, and autoregulating its own synthesis. It is required for the switch from immediate-early to early mode of gene expression. This chain is Major viral transcription factor ICP4 homolog (MDV084), found in Gallus gallus (Chicken).